Reading from the N-terminus, the 236-residue chain is Uridylate kinase (236 aa).

8 to 11 (KLSG) is an ATP binding site. Gly-51 contacts UMP. Residues Gly-52 and Arg-56 each coordinate ATP. UMP contacts are provided by residues Asp-71 and 133–140 (TGRPFFTT). Residues Asn-161, Phe-167, and Asp-170 each contribute to the ATP site.

It belongs to the UMP kinase family. As to quaternary structure, homohexamer.

It localises to the cytoplasm. The catalysed reaction is UMP + ATP = UDP + ADP. The protein operates within pyrimidine metabolism; CTP biosynthesis via de novo pathway; UDP from UMP (UMPK route): step 1/1. With respect to regulation, inhibited by UTP. Functionally, catalyzes the reversible phosphorylation of UMP to UDP. The sequence is that of Uridylate kinase from Mesomycoplasma hyopneumoniae (strain 232) (Mycoplasma hyopneumoniae).